The chain runs to 687 residues: Dictomallein (687 aa).

2 disordered regions span residues 1 to 45 (MGNG…SRRL) and 73 to 112 (TAGG…STSA). The Peptidase M66 domain occupies 233-501 (PVFGTDADVQ…QAWIASRVLA (269 aa)). His393 lines the Zn(2+) pocket. The active site involves Glu394. Residues His397 and His403 each coordinate Zn(2+).

This sequence belongs to the dictomallein family. Zn(2+) is required as a cofactor.

The polypeptide is Dictomallein (dtmL) (Burkholderia mallei (strain NCTC 10247)).